The sequence spans 427 residues: Adenylosuccinate synthetase (427 aa).

GTP contacts are provided by residues 12–18 and 40–42; these read GDEGKGK and GHT. D13 acts as the Proton acceptor in catalysis. Mg(2+) is bound by residues D13 and G40. Residues 13–16, 38–41, T127, R141, Q222, T237, and R301 each bind IMP; these read DEGK and NAGH. The Proton donor role is filled by H41. 297–303 contacts substrate; it reads VVTKRPR. GTP-binding positions include R303, 329-331, and 411-413; these read SLD and AVG.

This sequence belongs to the adenylosuccinate synthetase family. As to quaternary structure, homodimer. The cofactor is Mg(2+).

It localises to the cytoplasm. The catalysed reaction is IMP + L-aspartate + GTP = N(6)-(1,2-dicarboxyethyl)-AMP + GDP + phosphate + 2 H(+). It functions in the pathway purine metabolism; AMP biosynthesis via de novo pathway; AMP from IMP: step 1/2. In terms of biological role, plays an important role in the de novo pathway of purine nucleotide biosynthesis. Catalyzes the first committed step in the biosynthesis of AMP from IMP. This is Adenylosuccinate synthetase from Leuconostoc mesenteroides subsp. mesenteroides (strain ATCC 8293 / DSM 20343 / BCRC 11652 / CCM 1803 / JCM 6124 / NCDO 523 / NBRC 100496 / NCIMB 8023 / NCTC 12954 / NRRL B-1118 / 37Y).